Consider the following 350-residue polypeptide: ATPase GET3 (350 aa).

26 to 33 (KGGVGKTT) provides a ligand contact to ATP. Residue aspartate 57 is part of the active site. Residues glutamate 241 and asparagine 268 each contribute to the ATP site. Residues cysteine 281 and cysteine 284 each contribute to the Zn(2+) site.

This sequence belongs to the arsA ATPase family. Homodimer. Component of the Golgi to ER traffic (GET) complex, which is composed of GET1, GET2 and GET3. Within the complex, GET1 and GET2 form a heterotetramer which is stabilized by phosphatidylinositol binding and which binds to the GET3 homodimer. Interacts with the chloride channel protein GEF1.

It is found in the cytoplasm. It localises to the endoplasmic reticulum. Its subcellular location is the golgi apparatus. In terms of biological role, ATPase required for the post-translational delivery of tail-anchored (TA) proteins to the endoplasmic reticulum. Recognizes and selectively binds the transmembrane domain of TA proteins in the cytosol. This complex then targets to the endoplasmic reticulum by membrane-bound receptors GET1 and GET2, where the tail-anchored protein is released for insertion. This process is regulated by ATP binding and hydrolysis. ATP binding drives the homodimer towards the closed dimer state, facilitating recognition of newly synthesized TA membrane proteins. ATP hydrolysis is required for insertion. Subsequently, the homodimer reverts towards the open dimer state, lowering its affinity for the GET1-GET2 receptor, and returning it to the cytosol to initiate a new round of targeting. Cooperates with the HDEL receptor ERD2 to mediate the ATP-dependent retrieval of resident ER proteins that contain a C-terminal H-D-E-L retention signal from the Golgi to the ER. Involved in low-level resistance to the oxyanions arsenite and arsenate, and in heat tolerance. This chain is ATPase GET3, found in Candida glabrata (strain ATCC 2001 / BCRC 20586 / JCM 3761 / NBRC 0622 / NRRL Y-65 / CBS 138) (Yeast).